The following is a 147-amino-acid chain: Hemoglobin subunit beta (147 aa).

In terms of domain architecture, Globin spans 3–147 (EWTDKERSII…VVSALGKQYH (145 aa)). Histidine 64 and histidine 93 together coordinate heme b.

This sequence belongs to the globin family. As to quaternary structure, hb1 is a heterotetramer of two alpha chains and two beta chains. Red blood cells.

Functionally, involved in oxygen transport from gills to the various peripheral tissues. The sequence is that of Hemoglobin subunit beta (hbb) from Trematomus bernacchii (Emerald rockcod).